The chain runs to 336 residues: Phenylalanine--tRNA ligase alpha subunit (336 aa).

Glu-263 provides a ligand contact to Mg(2+).

The protein belongs to the class-II aminoacyl-tRNA synthetase family. Phe-tRNA synthetase alpha subunit type 1 subfamily. Tetramer of two alpha and two beta subunits. The cofactor is Mg(2+).

The protein localises to the cytoplasm. It catalyses the reaction tRNA(Phe) + L-phenylalanine + ATP = L-phenylalanyl-tRNA(Phe) + AMP + diphosphate + H(+). The sequence is that of Phenylalanine--tRNA ligase alpha subunit from Thermosynechococcus vestitus (strain NIES-2133 / IAM M-273 / BP-1).